A 469-amino-acid chain; its full sequence is Probable glucuronoxylan glucuronosyltransferase F8H (469 aa).

The Cytoplasmic portion of the chain corresponds to 1–36 (MSLDIKKPNITKTKKKKTGFVVKMQLNNNRGGNKRN). The helical; Signal-anchor for type II membrane protein transmembrane segment at 37–57 (IFIFFFFRNYYTWILWFCLSL) threads the bilayer. Residues 58–469 (YFFTSYFSVE…RVLSQREVDM (412 aa)) lie on the Lumenal side of the membrane. Residues Asn-171, Asn-203, Asn-301, and Asn-411 are each glycosylated (N-linked (GlcNAc...) asparagine).

The protein belongs to the glycosyltransferase 47 family. As to expression, expressed in xylem cells in stems and in roots.

It is found in the golgi apparatus membrane. In terms of biological role, involved in the synthesis of the hemicellulose glucuronoxylan, a major component of secondary cell walls. Probably involved in the synthesis of the glycosyl sequence at the glucuronoxylan reducing end. The polypeptide is Probable glucuronoxylan glucuronosyltransferase F8H (F8H) (Arabidopsis thaliana (Mouse-ear cress)).